The chain runs to 161 residues: 6,7-dimethyl-8-ribityllumazine synthase (161 aa).

5-amino-6-(D-ribitylamino)uracil contacts are provided by residues F23, 61 to 63 (SFE), and 85 to 87 (AVI). 90–91 (DT) provides a ligand contact to (2S)-2-hydroxy-3-oxobutyl phosphate. H93 functions as the Proton donor in the catalytic mechanism. Position 118 (F118) interacts with 5-amino-6-(D-ribitylamino)uracil. Position 132 (R132) interacts with (2S)-2-hydroxy-3-oxobutyl phosphate.

It belongs to the DMRL synthase family.

The catalysed reaction is (2S)-2-hydroxy-3-oxobutyl phosphate + 5-amino-6-(D-ribitylamino)uracil = 6,7-dimethyl-8-(1-D-ribityl)lumazine + phosphate + 2 H2O + H(+). Its pathway is cofactor biosynthesis; riboflavin biosynthesis; riboflavin from 2-hydroxy-3-oxobutyl phosphate and 5-amino-6-(D-ribitylamino)uracil: step 1/2. In terms of biological role, catalyzes the formation of 6,7-dimethyl-8-ribityllumazine by condensation of 5-amino-6-(D-ribitylamino)uracil with 3,4-dihydroxy-2-butanone 4-phosphate. This is the penultimate step in the biosynthesis of riboflavin. In Synechococcus sp. (strain WH7803), this protein is 6,7-dimethyl-8-ribityllumazine synthase.